The primary structure comprises 142 residues: Peptide methionine sulfoxide reductase MsrB (142 aa).

Positions 2-125 (IKKNKEELND…NSAAIQFIPY (124 aa)) constitute a MsrB domain. C114 acts as the Nucleophile in catalysis.

Belongs to the MsrB Met sulfoxide reductase family.

It carries out the reaction L-methionyl-[protein] + [thioredoxin]-disulfide + H2O = L-methionyl-(R)-S-oxide-[protein] + [thioredoxin]-dithiol. The polypeptide is Peptide methionine sulfoxide reductase MsrB (Staphylococcus epidermidis (strain ATCC 35984 / DSM 28319 / BCRC 17069 / CCUG 31568 / BM 3577 / RP62A)).